Here is a 520-residue protein sequence, read N- to C-terminus: Tetratricopeptide repeat protein 6 (520 aa).

TPR repeat units lie at residues 57-90, 101-138, 139-172, 176-209, 210-243, 245-280, 281-314, 320-347, 348-381, 382-415, 416-449, 450-483, and 484-517; these read MTMC…ISHS, ADCL…DKNS, YTAF…DATE, LNTF…SRTN, GSLC…NPCF, DAYV…NPAY, IKAR…DPKN, GRAV…ISTT, AEFL…NPKY, SLAY…DPEN, EYVL…CPFW, AAVY…KPND, and ALVY…EDYA.

This is Tetratricopeptide repeat protein 6 from Homo sapiens (Human).